The chain runs to 278 residues: MTVLHSVDFFPSGNASVAIEPRLPQADFPEHHHDFHEIVIVEHGTGIHVFNGQPYTITGGTVCFVRDHDRHLYEHTDNLCLTNVLYRSPDRFQFLAGLNQLLPQELDGQYPSHWRVNHSVLQQVRQLVAQMEQQEGENDLPSTASREILFMQLLLLLRKSSLQENLENSASRLNLLLAWLEDHFADEVNWDAVADQFSLSLRTLHRQLKQQTGLTPQRYLNRLRLMKARHLLRHSEASVTDIAYRCGFSDSNHFSTLFRREFNWSPRDIRQGRDGFLQ.

The 99-residue stretch at 174–272 folds into the HTH araC/xylS-type domain; sequence NLLLAWLEDH…NWSPRDIRQG (99 aa). 2 DNA-binding regions (H-T-H motif) span residues 191–212 and 239–262; these read DAVA…KQQT and VTDI…RREF.

As to quaternary structure, binds DNA as a dimer.

It localises to the cytoplasm. Activates expression of the rhaBAD and rhaT operons. In Shigella boydii serotype 4 (strain Sb227), this protein is HTH-type transcriptional activator RhaS.